We begin with the raw amino-acid sequence, 175 residues long: MGRTLESKQQIVEELKGLLGEAEMALVLDYQGLSIKEMSDLRTRLQASNGVCKVTKNTLMRHAINGNGAWSNLESLLTGTNAFVLIKGDVGGAVKAVQAFQKDTKKSETKGGLFEGKLLSQGEIKAIGDLPTKEVLMAQIAGSLNALATKVAVGINEVPSGLARALHQHAESGES.

It belongs to the universal ribosomal protein uL10 family. As to quaternary structure, part of the ribosomal stalk of the 50S ribosomal subunit. The N-terminus interacts with L11 and the large rRNA to form the base of the stalk. The C-terminus forms an elongated spine to which L12 dimers bind in a sequential fashion forming a multimeric L10(L12)X complex.

Forms part of the ribosomal stalk, playing a central role in the interaction of the ribosome with GTP-bound translation factors. This chain is Large ribosomal subunit protein uL10, found in Prochlorococcus marinus (strain MIT 9313).